The sequence spans 810 residues: Transitional endoplasmic reticulum ATPase homolog 2 (810 aa).

ATP-binding positions include 252 to 258 (PGTGKTL), N353, H389, and 526 to 531 (GCGKTL). The span at 713–727 (RQEKERQDRSARGEE) shows a compositional bias: basic and acidic residues. 2 disordered regions span residues 713–732 (RQEK…MEDE) and 777–810 (FGNN…DLYN). Over residues 793–802 (PVGGNGGSGG) the composition is skewed to gly residues. Residues 805-810 (DDDLYN) are interaction with ufd-2.

This sequence belongs to the AAA ATPase family. CDC48 subfamily. Homohexamer; oligomerization is ATP-independent. Forms a ring-shaped particle of 18.3 nm diameter, that displays 6-fold radial symmetry. Interacts with cdc-48.1 and thus may form heterohexamers. Forms a complex composed of ubxn-3, cdc-48.1 and/or cdc-48.2 and substrate cdt-1. Interacts (via N-terminus) with ubxn-3. Interacts (via N-terminus) with atx-3 (via RRDR motif). Interacts (via N-terminus) with ubxn-5. Interacts with ufd-1. Interacts (via DDDLYN motif) with ufd-2. Interacts (via N-terminus) with ubxn-1. Interacts (via N-terminus) with ubxn-2. Interacts (via N-terminus) with ubxn-4. Interacts with ubxn-6. In terms of tissue distribution, expressed in body wall muscles.

It is found in the cytoplasm. The enzyme catalyses ATP + H2O = ADP + phosphate + H(+). Its activity is regulated as follows. The first ATP-binding region has low ATPase activity. The second ATP-binding region is responsible for ATPase activity. ATP binding to the first ATP-binding region induces intrinsic activity of the second ATP-binding region. While ATP binding to the first ATP-binding region appears to prevent ATP hydrolysis by the second ATP-binding region, ADP-binding to first region promotes the coordinate and cooperative ATPase cycle of the second ATP-binding region. ATP binding to the first ATP-binding region induces a conformational change, promoting the rotation of the first ATP-binding region relative to the second ATP-binding region in the hexamer. Inhibited by N-ethylmaleimide (NEM). Functionally, ATP-dependent chaperone which probably uses the energy provided by ATP hydrolysis to generate mechanical force to unfold substrate proteins, disassemble protein complexes, and disaggregate protein aggregates. However, able to prevent aggregation of unfolded proteins also in an ATP-independent manner. Targets polyubiquitinated proteins for proteasomal degradation by binding to 'Lys-48'-linked polyubiquitin chains. Involved in the cytoplasmic elimination of misfolded proteins exported from the ER. This pathway, known as ERAD, prevents the activation of the unfolded protein response (UPR) caused by the accumulation of misfolded proteins in the ER. Together with udf-2 and chn-1, regulates myosin assembly in body wall muscles by targeting myosin chaperone unc-45 for proteasomal degradation. During oocyte meiosis and together with cdc-48.1, required for chromosome condensation at the diakinesis phase in prophase I and for progression of metaphase I. During the first embryonic cell division, regulates DNA replication and thus chromosome segregation and decondensation, and nuclear envelope re-assembly. In S phase and in association with ufd-1, npl-4.1 and/or npl-4.2 and ubxn-3, ensures the degradation of DNA licensing factor cdt-1 after the initiation of DNA replication and thus the disassembly of the DNA replication CMG helicase complex by promoting the dissociation from chromatin of several of its components including cdc-45 and sld-5. Regulates ubxn-3 nuclear localization during S phase. During the first embryonic cell divisions and together with cdc-48.1, regulates the re-assembly of the nuclear envelope after mitosis possibly by inactivating kinase air-2, a component of the chromosomal passenger complex (CPC). The sequence is that of Transitional endoplasmic reticulum ATPase homolog 2 (cdc-48.2) from Caenorhabditis elegans.